Consider the following 158-residue polypeptide: Ribosome maturation factor RimP (158 aa).

Belongs to the RimP family.

The protein resides in the cytoplasm. Required for maturation of 30S ribosomal subunits. The chain is Ribosome maturation factor RimP from Pseudomonas savastanoi pv. phaseolicola (strain 1448A / Race 6) (Pseudomonas syringae pv. phaseolicola (strain 1448A / Race 6)).